The primary structure comprises 276 residues: TCP pilus virulence regulatory protein (276 aa).

The region spanning 172-269 is the HTH araC/xylS-type domain; the sequence is EKISCLVKSD…NVAPSEYLFM (98 aa). 2 consecutive DNA-binding regions (H-T-H motif) follow at residues 189 to 210 and 236 to 259; these read ADICGELRTNRMILKKELESRG and IKQIAYQSGFASVSYFSTVFKSTM.

Its subcellular location is the cytoplasm. Functionally, probable regulatory protein for the tcp operon. In Vibrio cholerae serotype O1 (strain ATCC 39541 / Classical Ogawa 395 / O395), this protein is TCP pilus virulence regulatory protein (tcpN).